Reading from the N-terminus, the 80-residue chain is Large ribosomal subunit protein bL31 (80 aa).

Residues C16, C18, C38, and C41 each contribute to the Zn(2+) site.

This sequence belongs to the bacterial ribosomal protein bL31 family. Type A subfamily. In terms of assembly, part of the 50S ribosomal subunit. It depends on Zn(2+) as a cofactor.

In terms of biological role, binds the 23S rRNA. This chain is Large ribosomal subunit protein bL31, found in Rhodococcus jostii (strain RHA1).